We begin with the raw amino-acid sequence, 322 residues long: Undecaprenyl-phosphate 4-deoxy-4-formamido-L-arabinose transferase (322 aa).

The Cytoplasmic portion of the chain corresponds to 1–235 (MFEIHPVKKV…TCLTTTPLRM (235 aa)). Residues 236-256 (LSLLGSIIAIGGFSIAVLLVI) traverse the membrane as a helical segment. Residues 257 to 269 (LRLTFGPQWAAEG) are Periplasmic-facing. A helical transmembrane segment spans residues 270–290 (VFMLFAVLFTFIGAQFIGMGL). The Cytoplasmic segment spans residues 291–322 (LGEYIGRIYTDVRARPRYFVQQVIRPSSKENE).

It belongs to the glycosyltransferase 2 family.

It localises to the cell inner membrane. It carries out the reaction UDP-4-deoxy-4-formamido-beta-L-arabinose + di-trans,octa-cis-undecaprenyl phosphate = 4-deoxy-4-formamido-alpha-L-arabinopyranosyl di-trans,octa-cis-undecaprenyl phosphate + UDP. It participates in glycolipid biosynthesis; 4-amino-4-deoxy-alpha-L-arabinose undecaprenyl phosphate biosynthesis; 4-amino-4-deoxy-alpha-L-arabinose undecaprenyl phosphate from UDP-4-deoxy-4-formamido-beta-L-arabinose and undecaprenyl phosphate: step 1/2. Its pathway is bacterial outer membrane biogenesis; lipopolysaccharide biosynthesis. Catalyzes the transfer of 4-deoxy-4-formamido-L-arabinose from UDP to undecaprenyl phosphate. The modified arabinose is attached to lipid A and is required for resistance to polymyxin and cationic antimicrobial peptides. The protein is Undecaprenyl-phosphate 4-deoxy-4-formamido-L-arabinose transferase of Escherichia coli O157:H7 (strain EC4115 / EHEC).